A 309-amino-acid polypeptide reads, in one-letter code: Methionine synthase (309 aa).

4 residues coordinate Zn(2+): His-201, Cys-203, Glu-224, and Cys-285.

It belongs to the archaeal MetE family. Zn(2+) serves as cofactor.

Its pathway is amino-acid biosynthesis; L-methionine biosynthesis via de novo pathway. Is activated by phosphates. Its function is as follows. Catalyzes the transfer of a methyl group to L-homocysteine resulting in methionine formation. Can use methylcobalamin and methylcobinamide as methyl donors, but methylcobalamin is not considered to be the physiological substrate. It was proposed that, in vivo, a so-far-unidentified enzyme catalyzes methyltransfer from 5-methyltetrahydromethanopterin (5-CH3-H4MPT) to a corrinoid protein, and that the MetE gene product catalyzes the further transfer to L-homocysteine. Is not active with L-cysteine, coenzyme M, coenzyme B, glutathione or dithiothreitol as substrate. The protein is Methionine synthase of Methanothermobacter marburgensis (strain ATCC BAA-927 / DSM 2133 / JCM 14651 / NBRC 100331 / OCM 82 / Marburg) (Methanobacterium thermoautotrophicum).